We begin with the raw amino-acid sequence, 229 residues long: Enolase-phosphatase E1 (229 aa).

Residues 208-218 are compositionally biased toward polar residues; it reads DTQSTHRQVSS. The interval 208 to 229 is disordered; sequence DTQSTHRQVSSFDDIHPEQIPT. Basic and acidic residues predominate over residues 220 to 229; sequence DDIHPEQIPT.

This sequence belongs to the HAD-like hydrolase superfamily. MasA/MtnC family. In terms of assembly, monomer. Mg(2+) is required as a cofactor.

It catalyses the reaction 5-methylsulfanyl-2,3-dioxopentyl phosphate + H2O = 1,2-dihydroxy-5-(methylsulfanyl)pent-1-en-3-one + phosphate. It functions in the pathway amino-acid biosynthesis; L-methionine biosynthesis via salvage pathway; L-methionine from S-methyl-5-thio-alpha-D-ribose 1-phosphate: step 3/6. It participates in amino-acid biosynthesis; L-methionine biosynthesis via salvage pathway; L-methionine from S-methyl-5-thio-alpha-D-ribose 1-phosphate: step 4/6. In terms of biological role, bifunctional enzyme that catalyzes the enolization of 2,3-diketo-5-methylthiopentyl-1-phosphate (DK-MTP-1-P) into the intermediate 2-hydroxy-3-keto-5-methylthiopentenyl-1-phosphate (HK-MTPenyl-1-P), which is then dephosphorylated to form the acireductone 1,2-dihydroxy-3-keto-5-methylthiopentene (DHK-MTPene). The sequence is that of Enolase-phosphatase E1 from Cronobacter sakazakii (Enterobacter sakazakii).